The sequence spans 309 residues: 2-dehydro-3-deoxygluconokinase (309 aa).

Residues 28–32 (GDTLN), Y88, 102–104 (YWR), and R170 each bind substrate. ATP contacts are provided by residues 168–170 (NYR), 228–233 (KRGADS), and 261–264 (AAGD). Substrate is bound at residue D264. The active-site Proton acceptor is D264.

This sequence belongs to the carbohydrate kinase pfkB family.

The catalysed reaction is 2-dehydro-3-deoxy-D-gluconate + ATP = 2-dehydro-3-deoxy-6-phospho-D-gluconate + ADP + H(+). Its pathway is carbohydrate acid metabolism; 2-dehydro-3-deoxy-D-gluconate degradation; D-glyceraldehyde 3-phosphate and pyruvate from 2-dehydro-3-deoxy-D-gluconate: step 1/2. Functionally, catalyzes the phosphorylation of 2-keto-3-deoxygluconate (KDG) to produce 2-keto-3-deoxy-6-phosphogluconate (KDPG). The chain is 2-dehydro-3-deoxygluconokinase (kdgK) from Escherichia coli (strain ATCC 9637 / CCM 2024 / DSM 1116 / LMG 11080 / NBRC 13500 / NCIMB 8666 / NRRL B-766 / W).